The following is a 136-amino-acid chain: Small ribosomal subunit protein uS8c (136 aa).

It belongs to the universal ribosomal protein uS8 family. In terms of assembly, part of the 30S ribosomal subunit.

The protein localises to the plastid. Its subcellular location is the chloroplast. One of the primary rRNA binding proteins, it binds directly to 16S rRNA central domain where it helps coordinate assembly of the platform of the 30S subunit. This chain is Small ribosomal subunit protein uS8c (rps8), found in Saccharum officinarum (Sugarcane).